The following is a 68-amino-acid chain: Conotoxin Vx2 (68 aa).

An N-terminal signal peptide occupies residues 1-20 (MMSKLGVLVTICLLLFPLTA). Positions 21–47 (LPLDGDQPADHPAKRTQDHNLASPISA) are excised as a propeptide. Cystine bridges form between C55/C68, C56/C61, and C57/C65.

The protein belongs to the conotoxin M superfamily. In terms of tissue distribution, expressed by the venom duct.

Its subcellular location is the secreted. In vivo, elicits a series of symptoms, such as being sedative, tail stiffening and twisted jumping, when injected intracranially into mice. This is Conotoxin Vx2 from Conus vexillum (Flag cone).